Consider the following 258-residue polypeptide: Tryptophan synthase alpha chain (258 aa).

Catalysis depends on proton acceptor residues glutamate 47 and aspartate 58.

Belongs to the TrpA family. In terms of assembly, tetramer of two alpha and two beta chains.

The catalysed reaction is (1S,2R)-1-C-(indol-3-yl)glycerol 3-phosphate + L-serine = D-glyceraldehyde 3-phosphate + L-tryptophan + H2O. It functions in the pathway amino-acid biosynthesis; L-tryptophan biosynthesis; L-tryptophan from chorismate: step 5/5. Its function is as follows. The alpha subunit is responsible for the aldol cleavage of indoleglycerol phosphate to indole and glyceraldehyde 3-phosphate. The chain is Tryptophan synthase alpha chain from Bacillus anthracis (strain CDC 684 / NRRL 3495).